The primary structure comprises 625 residues: ATP-dependent RNA helicase mrh4, mitochondrial (625 aa).

Residues M1–A16 constitute a mitochondrion transit peptide. The span at T19–S28 shows a compositional bias: low complexity. Residues T19–L119 are disordered. Over residues D90–T113 the composition is skewed to basic and acidic residues. A Q motif motif is present at residues Q144–R177. One can recognise a Helicase ATP-binding domain in the interval P195–I406. ATP is bound at residue A208–T215. The DEAD box signature appears at D353–D356. A Helicase C-terminal domain is found at E453–V625.

This sequence belongs to the DEAD box helicase family. MRH4 subfamily.

It is found in the mitochondrion. The enzyme catalyses ATP + H2O = ADP + phosphate + H(+). Its function is as follows. ATP-binding RNA helicase involved in mitochondrial RNA metabolism. Required for maintenance of mitochondrial DNA. This Neurospora crassa (strain ATCC 24698 / 74-OR23-1A / CBS 708.71 / DSM 1257 / FGSC 987) protein is ATP-dependent RNA helicase mrh4, mitochondrial (drh-15).